Consider the following 364-residue polypeptide: D-alanine--D-alanine ligase (364 aa).

Positions 146–352 constitute an ATP-grasp domain; sequence KLCAADAGVE…FDELISRLLL (207 aa). 179–234 contributes to the ATP binding site; it reads TERFAFPVFVKPANLGSSVGISKVHNAAELRPALDKACALDAKVLVEETITGREVE. D305, E319, and N321 together coordinate Mg(2+).

Belongs to the D-alanine--D-alanine ligase family. It depends on Mg(2+) as a cofactor. Mn(2+) is required as a cofactor.

The protein localises to the cytoplasm. It carries out the reaction 2 D-alanine + ATP = D-alanyl-D-alanine + ADP + phosphate + H(+). It participates in cell wall biogenesis; peptidoglycan biosynthesis. Cell wall formation. The polypeptide is D-alanine--D-alanine ligase (Chlorobaculum parvum (strain DSM 263 / NCIMB 8327) (Chlorobium vibrioforme subsp. thiosulfatophilum)).